Reading from the N-terminus, the 192-residue chain is MKKVKKKRSEARRHRDSTSQHASSNSTSQQPSPESTPQQPSPESTPQQPSPESTPQHSSLETTSRQPAFQALPAPEIRRSSCCLLSPDANVKAAPQSRKAGPLIRAGPHSCSCATCPCSSACWRRLGLCHSRIFDVLLPRDWQMAPGRGLPNLLTFYRKSSRKPSSHRNACPPSPRNCGCGSGGSRSCLLHH.

Residues 1 to 15 show a composition bias toward basic residues; it reads MKKVKKKRSEARRHR. 2 disordered regions span residues 1-65 and 161-184; these read MKKV…TTSR and SRKP…GSGG. Residues 19–59 show a composition bias toward low complexity; the sequence is SQHASSNSTSQQPSPESTPQQPSPESTPQQPSPESTPQHSS.

It localises to the cell projection. The protein resides in the cilium. Its subcellular location is the flagellum. This chain is Spermatogenesis-associated protein 3 (SPATA3), found in Homo sapiens (Human).